The primary structure comprises 113 residues: uncharacterized protein (113 aa).

Disordered regions lie at residues 1–22 (MGEH…PLAQ) and 90–113 (DGRH…SDDL). The segment covering 90–99 (DGRHTTESSF) has biased composition (basic and acidic residues). The span at 100–113 (EHSSPSRSPQSDDL) shows a compositional bias: low complexity.

This is an uncharacterized protein from Mycobacterium tuberculosis (strain CDC 1551 / Oshkosh).